Reading from the N-terminus, the 101-residue chain is Apolipoprotein C-II (101 aa).

Positions Met-1–Gly-22 are cleaved as a signal peptide. Residues Asp-23–Gln-28 constitute a propeptide, removed in mature form. The lipid binding stretch occupies residues Ala-66 to Met-74. Residues Ser-78–Pro-101 form a lipoprotein lipase cofactor region.

This sequence belongs to the apolipoprotein C2 family. In terms of processing, proapolipoprotein C-II is synthesized as a sialic acid containing glycoprotein which is subsequently desialylated prior to its proteolytic processing. Proapolipoprotein C-II, the major form found in plasma undergoes proteolytic cleavage of its N-terminal hexapeptide to generate the mature form apolipoprotein C-II, which occurs as the minor form in plasma.

It is found in the secreted. In terms of biological role, component of chylomicrons, very low-density lipoproteins (VLDL), low-density lipoproteins (LDL), and high-density lipoproteins (HDL) in plasma. Plays an important role in lipoprotein metabolism as an activator of lipoprotein lipase, the enzyme which hydrolyzes the triacylglycerols on chylomicrons and VLDL. The protein is Apolipoprotein C-II (APOC2) of Panthera tigris altaica (Siberian tiger).